The sequence spans 206 residues: Histidine biosynthesis bifunctional protein HisIE (206 aa).

The interval 1 to 114 is phosphoribosyl-AMP cyclohydrolase; that stretch reads MLKKINFIDI…FQVPSENLFF (114 aa). The interval 115–206 is phosphoribosyl-ATP pyrophosphohydrolase; it reads LHDLDCMLKF…NLKMRSNKQV (92 aa).

It in the N-terminal section; belongs to the PRA-CH family. The protein in the C-terminal section; belongs to the PRA-PH family.

The protein localises to the cytoplasm. It catalyses the reaction 1-(5-phospho-beta-D-ribosyl)-ATP + H2O = 1-(5-phospho-beta-D-ribosyl)-5'-AMP + diphosphate + H(+). It carries out the reaction 1-(5-phospho-beta-D-ribosyl)-5'-AMP + H2O = 1-(5-phospho-beta-D-ribosyl)-5-[(5-phospho-beta-D-ribosylamino)methylideneamino]imidazole-4-carboxamide. It participates in amino-acid biosynthesis; L-histidine biosynthesis; L-histidine from 5-phospho-alpha-D-ribose 1-diphosphate: step 2/9. Its pathway is amino-acid biosynthesis; L-histidine biosynthesis; L-histidine from 5-phospho-alpha-D-ribose 1-diphosphate: step 3/9. This chain is Histidine biosynthesis bifunctional protein HisIE (hisI), found in Buchnera aphidicola subsp. Baizongia pistaciae (strain Bp).